Consider the following 103-residue polypeptide: Urease subunit beta (103 aa).

Belongs to the urease beta subunit family. In terms of assembly, heterotrimer of UreA (gamma), UreB (beta) and UreC (alpha) subunits. Three heterotrimers associate to form the active enzyme.

It is found in the cytoplasm. The catalysed reaction is urea + 2 H2O + H(+) = hydrogencarbonate + 2 NH4(+). It functions in the pathway nitrogen metabolism; urea degradation; CO(2) and NH(3) from urea (urease route): step 1/1. This chain is Urease subunit beta, found in Streptomyces coelicolor (strain ATCC BAA-471 / A3(2) / M145).